Consider the following 306-residue polypeptide: Tryptophan 2,3-dioxygenase (306 aa).

The tract at residues 1-33 is disordered; sequence MQPPGDDAAPRCPFAGAHAPDAPHVPEAAGDDA. Substrate is bound by residues 75–79, Tyr-137, and Arg-141; that span reads FIIQH. His-264 provides a ligand contact to heme. Residue Thr-278 coordinates substrate.

Belongs to the tryptophan 2,3-dioxygenase family. In terms of assembly, homotetramer. It depends on heme as a cofactor.

The enzyme catalyses L-tryptophan + O2 = N-formyl-L-kynurenine. Its pathway is amino-acid degradation; L-tryptophan degradation via kynurenine pathway; L-kynurenine from L-tryptophan: step 1/2. In terms of biological role, heme-dependent dioxygenase that catalyzes the oxidative cleavage of the L-tryptophan (L-Trp) pyrrole ring and converts L-tryptophan to N-formyl-L-kynurenine. Catalyzes the oxidative cleavage of the indole moiety. The polypeptide is Tryptophan 2,3-dioxygenase (Burkholderia pseudomallei (strain 1106a)).